The chain runs to 327 residues: GMP reductase (327 aa).

The active-site Thioimidate intermediate is the C175. Residue 204-227 (IIADGGIRTHGDIAKSIRFGASMV) coordinates NADP(+).

It belongs to the IMPDH/GMPR family. GuaC type 2 subfamily.

It catalyses the reaction IMP + NH4(+) + NADP(+) = GMP + NADPH + 2 H(+). Catalyzes the irreversible NADPH-dependent deamination of GMP to IMP. It functions in the conversion of nucleobase, nucleoside and nucleotide derivatives of G to A nucleotides, and in maintaining the intracellular balance of A and G nucleotides. The chain is GMP reductase from Oceanobacillus iheyensis (strain DSM 14371 / CIP 107618 / JCM 11309 / KCTC 3954 / HTE831).